Reading from the N-terminus, the 1803-residue chain is 6-methylsalicylic acid synthase (1803 aa).

The disordered stretch occupies residues 1–40 (MEVHGDEVLSVDSGVSTPPSTGSGFRRPLETPGTEIGNLN). Residues 13–24 (SGVSTPPSTGSG) show a composition bias toward low complexity. The 427-residue stretch at 44–470 (QNEVAVVGMA…GTVSHAIIEE (427 aa)) folds into the Ketosynthase family 3 (KS3) domain. Residues Cys216, His351, and His391 each act as for beta-ketoacyl synthase activity in the active site. The 314-residue stretch at 581–894 (VWVFSGHGAQ…SIAQLHCRGA (314 aa)) folds into the Malonyl-CoA:ACP transacylase (MAT) domain. The active-site For malonyltransferase activity is the Ser667. An N-terminal hotdog fold region spans residues 940 to 1058 (HTLLGQRVPV…GQWEAGGSKN (119 aa)). One can recognise a PKS/mFAS DH domain in the interval 940–1218 (HTLLGQRVPV…FSEIEGTPGS (279 aa)). His972 (proton acceptor; for thioesterase activity) is an active-site residue. Residues 1073–1218 (ANNKLADNFS…FSEIEGTPGS (146 aa)) are C-terminal hotdog fold. Catalysis depends on Asp1129, which acts as the Proton donor; for thioesterase activity. The interval 1141–1262 (TSVGSTLFFD…KNVADLYCGS (122 aa)) is required for homotetramer formation. The region spanning 1434–1628 (STYLITGGLG…AVAVQWTSWR (195 aa)) is the Ketoreductase (KR) domain. Residues 1701–1710 (ASSADAPSAA) show a composition bias toward low complexity. The disordered stretch occupies residues 1701-1721 (ASSADAPSAAPKETNEMPESI). A Carrier domain is found at 1726–1801 (TWLDERIRDC…HLVGWFLEKM (76 aa)). The residue at position 1761 (Ser1761) is an O-(pantetheine 4'-phosphoryl)serine. Residues 1783 to 1803 (LTWSCPTVSHLVGWFLEKMGN) form a required for catalytic activity region.

As to quaternary structure, homotetramer.

It catalyses the reaction 3 malonyl-CoA + acetyl-CoA + NADPH + 3 H(+) = 6-methylsalicylate + 3 CO2 + NADP(+) + 4 CoA + H2O. Its pathway is secondary metabolite biosynthesis. Its function is as follows. 6-methylsalicylic acid synthase; part of the gene cluster that mediates the biosynthesis of terreic acid, a quinone epoxide inhibitor of Bruton's tyrosine kinase. The first step of the pathway is the synthesis of 6-methylsalicylic acid (6-MSA) by the 6-methylsalicylic acid synthase atX. In the biosynthesis of 6-MSA, atX utilizes one acetyl-CoA and three malonyl-CoAs as its substrates and catalyzes a series of programmed reactions including Claisen condensation, reduction, aldol cyclization, and the hydrolytic cleavage that yields 6-MSA. The 6-methylsalicylate 1-monooxygenase atA then catalyzes the decarboxylative hydroxylation of 6-MSA to 3-methylcatechol. The next step is the conversion of 3-methylcatechol to 3-methyl-1,2,4-benzenetriol by cytochrome P450 monooxygenase atE, which is enhanced by cytochrome P450 monooxygenase atG. Then, the epoxidase atD catalyzes the epoxidation and hydroxyl oxidation of 3-methyl-1,2,4-benzenetriol to terremutin. Lastly, GMC oxidoreductase atC oxidizes terremutin to terreic acid. In Aspergillus terreus (strain NIH 2624 / FGSC A1156), this protein is 6-methylsalicylic acid synthase.